The chain runs to 88 residues: Small ribosomal subunit protein uS19 (88 aa).

Belongs to the universal ribosomal protein uS19 family.

In terms of biological role, protein S19 forms a complex with S13 that binds strongly to the 16S ribosomal RNA. This chain is Small ribosomal subunit protein uS19 (rpsS), found in Chlamydia pneumoniae (Chlamydophila pneumoniae).